The chain runs to 697 residues: Potassium-transporting ATPase ATP-binding subunit (697 aa).

Transmembrane regions (helical) follow at residues 55-75 (PIMFVVEIGFIITLILSFLPS), 82-102 (GWFNITVSLILLFTVLFANFA), 245-265 (LTLIFLIVVVTLPIFTNYLGF), and 271-291 (VLVALLVCLIPTTIGGLLSAI). The active-site 4-aspartylphosphate intermediate is D324. ATP contacts are provided by residues D361, E365, 393–400 (FKAETRMS), and K412. Mg(2+)-binding residues include D535 and D539. 3 helical membrane passes run 605–625 (FAIIPAMFTLAIPQMEALNIM), 633–653 (AILSALIFNAVIIPLLIPLAM), and 677–697 (GGVIVPFIGIKVIDMIVGLFI).

Belongs to the cation transport ATPase (P-type) (TC 3.A.3) family. Type IA subfamily. In terms of assembly, the system is composed of three essential subunits: KdpA, KdpB and KdpC.

It is found in the cell membrane. It catalyses the reaction K(+)(out) + ATP + H2O = K(+)(in) + ADP + phosphate + H(+). In terms of biological role, part of the high-affinity ATP-driven potassium transport (or Kdp) system, which catalyzes the hydrolysis of ATP coupled with the electrogenic transport of potassium into the cytoplasm. This subunit is responsible for energy coupling to the transport system and for the release of the potassium ions to the cytoplasm. The chain is Potassium-transporting ATPase ATP-binding subunit from Bacillus mycoides (strain KBAB4) (Bacillus weihenstephanensis).